The sequence spans 396 residues: Elongation factor Tu (396 aa).

Positions K10–V206 constitute a tr-type G domain. Residues G19 to T26 are G1. Position 19-26 (G19–T26) interacts with GTP. T26 provides a ligand contact to Mg(2+). The G2 stretch occupies residues T60–T64. Residues D83–G86 form a G3 region. GTP contacts are provided by residues D83–H87 and N138–D141. The segment at N138 to D141 is G4. Residues A176–L178 form a G5 region.

Belongs to the TRAFAC class translation factor GTPase superfamily. Classic translation factor GTPase family. EF-Tu/EF-1A subfamily. Monomer.

The protein resides in the cytoplasm. The enzyme catalyses GTP + H2O = GDP + phosphate + H(+). Its function is as follows. GTP hydrolase that promotes the GTP-dependent binding of aminoacyl-tRNA to the A-site of ribosomes during protein biosynthesis. The polypeptide is Elongation factor Tu (Sorangium cellulosum (strain So ce56) (Polyangium cellulosum (strain So ce56))).